The chain runs to 342 residues: Uricase (342 aa).

Residues lysine 35 and threonine 80 each act as charge relay system in the active site. Threonine 80, aspartate 81, phenylalanine 204, arginine 221, valine 269, glutamine 270, and asparagine 296 together coordinate urate. Histidine 298 serves as the catalytic Charge relay system. Residues 340-342 (SHL) carry the Microbody targeting signal motif.

This sequence belongs to the uricase family. As to expression, malpighian tubules.

It is found in the peroxisome. The catalysed reaction is urate + O2 + H2O = 5-hydroxyisourate + H2O2. It functions in the pathway purine metabolism; urate degradation; (S)-allantoin from urate: step 1/3. With respect to regulation, repressed by 20-hydroxyecdysone. Functionally, catalyzes the oxidation of uric acid to 5-hydroxyisourate, which is further processed to form (S)-allantoin. The polypeptide is Uricase (Uro) (Drosophila virilis (Fruit fly)).